A 406-amino-acid chain; its full sequence is Succinylornithine transaminase (406 aa).

Lysine 252 carries the post-translational modification N6-(pyridoxal phosphate)lysine.

Belongs to the class-III pyridoxal-phosphate-dependent aminotransferase family. AstC subfamily. Pyridoxal 5'-phosphate is required as a cofactor.

The catalysed reaction is N(2)-succinyl-L-ornithine + 2-oxoglutarate = N-succinyl-L-glutamate 5-semialdehyde + L-glutamate. It functions in the pathway amino-acid degradation; L-arginine degradation via AST pathway; L-glutamate and succinate from L-arginine: step 3/5. In terms of biological role, catalyzes the transamination of N(2)-succinylornithine and alpha-ketoglutarate into N(2)-succinylglutamate semialdehyde and glutamate. Can also act as an acetylornithine aminotransferase. The protein is Succinylornithine transaminase of Shigella sonnei (strain Ss046).